The chain runs to 334 residues: F420-dependent glucose-6-phosphate dehydrogenase (334 aa).

A coenzyme F420-(gamma-Glu)n-binding site is contributed by aspartate 38. Catalysis depends on histidine 39, which acts as the Proton donor. Coenzyme F420-(gamma-Glu)n-binding positions include threonine 75 and 106 to 107 (TG). Glutamate 108 serves as the catalytic Proton acceptor. Coenzyme F420-(gamma-Glu)n contacts are provided by residues asparagine 111, 175-176 (GG), and 178-179 (LV). Residues threonine 193, lysine 196, lysine 257, and arginine 281 each coordinate substrate.

Belongs to the F420-dependent glucose-6-phosphate dehydrogenase family. In terms of assembly, homodimer.

The enzyme catalyses oxidized coenzyme F420-(gamma-L-Glu)(n) + D-glucose 6-phosphate + H(+) = 6-phospho-D-glucono-1,5-lactone + reduced coenzyme F420-(gamma-L-Glu)(n). In terms of biological role, catalyzes the coenzyme F420-dependent oxidation of glucose 6-phosphate (G6P) to 6-phosphogluconolactone. This Kribbella flavida (strain DSM 17836 / JCM 10339 / NBRC 14399) protein is F420-dependent glucose-6-phosphate dehydrogenase.